The sequence spans 259 residues: DNA repair protein RecO (259 aa).

It belongs to the RecO family.

In terms of biological role, involved in DNA repair and RecF pathway recombination. The sequence is that of DNA repair protein RecO from Rhizobium rhizogenes (strain K84 / ATCC BAA-868) (Agrobacterium radiobacter).